The following is a 411-amino-acid chain: Small ribosomal subunit protein bS1c (411 aa).

The transit peptide at 1–41 (MASLAQQLAGGLRCPPLSNSNLSKPFSPKHTLKPRFSPIVS) directs the protein to the chloroplast. 3 S1 motif domains span residues 96 to 166 (GSRV…LSLR), 184 to 248 (DVVV…MSNR), and 261 to 329 (GSVV…LSTK).

The protein belongs to the bacterial ribosomal protein bS1 family. Component of the chloroplast small ribosomal subunit (SSU). Mature 70S chloroplast ribosomes of higher plants consist of a small (30S) and a large (50S) subunit. The 30S small subunit contains 1 molecule of ribosomal RNA (16S rRNA) and 24 different proteins. The 50S large subunit contains 3 rRNA molecules (23S, 5S and 4.5S rRNA) and 33 different proteins.

Its subcellular location is the plastid. The protein localises to the chloroplast. In terms of biological role, component of the chloroplast ribosome (chloro-ribosome), a dedicated translation machinery responsible for the synthesis of chloroplast genome-encoded proteins, including proteins of the transcription and translation machinery and components of the photosynthetic apparatus. Actively engaged in the initiation complex formation via a strong mRNA-binding activity. Possesses a poly(A)-binding activity which might play a role as a control element in chloroplast mRNA translation. This chain is Small ribosomal subunit protein bS1c (RPS1), found in Spinacia oleracea (Spinach).